The chain runs to 300 residues: F-box protein SKIP1 (300 aa).

Residues 11–52 form the F-box; degenerate domain; it reads LAPEILINIISRLTIQELWTGPMFVQKSWLTVCRDPYLWSIF.

As to quaternary structure, part of a SCF (ASK-cullin-F-box) protein ligase complex. Interacts with SKP1A/ASK1 and SKP1B/ASK2.

The protein resides in the nucleus. Its pathway is protein modification; protein ubiquitination. Component of SCF(ASK-cullin-F-box) E3 ubiquitin ligase complexes, which may mediate the ubiquitination and subsequent proteasomal degradation of target proteins. This Arabidopsis thaliana (Mouse-ear cress) protein is F-box protein SKIP1 (SKIP1).